A 172-amino-acid chain; its full sequence is Chromosome-anchoring protein RacA (172 aa).

The segment at residues Thr-5 to Lys-25 is a DNA-binding region (H-T-H motif). 2 disordered regions span residues Ala-57–Ile-76 and Gln-142–Ala-172. The span at Pro-62 to Pro-71 shows a compositional bias: pro residues. The stretch at Glu-83–Arg-146 forms a coiled coil. Residues Gln-142–His-151 are compositionally biased toward polar residues.

Belongs to the RacA family.

Its subcellular location is the cytoplasm. Its function is as follows. Required for the formation of axial filaments and for anchoring the origin regions at the cell poles in sporulating cells, thus ensuring proper chromosome segregation in the prespore. Binds in a dispersed manner throughout the chromosome but preferentially to sites clustered in the origin portion of the chromosome, causing condensation of the chromosome and its remodeling into an elongated, anchored structure. The polypeptide is Chromosome-anchoring protein RacA (Geobacillus kaustophilus (strain HTA426)).